The sequence spans 406 residues: D-alanyl-D-alanine carboxypeptidase (406 aa).

The N-terminal stretch at 1-31 (MVSGTVGRGTALGAVLLALLAVPAQAGTAAA) is a signal peptide. Catalysis depends on S93, which acts as the Acyl-ester intermediate. Residues 151–154 (FAQT), 190–192 (YSN), R316, 330–332 (TGT), and 357–358 (SN) contribute to the substrate site. Positions 381-406 (AKLRSATSSATTVERHEDIAPGIARD) are excised as a propeptide. The segment at 387–406 (TSSATTVERHEDIAPGIARD) is disordered. Residues 393-406 (VERHEDIAPGIARD) are compositionally biased toward basic and acidic residues.

The protein belongs to the peptidase S12 family.

The protein localises to the secreted. The catalysed reaction is Preferential cleavage: (Ac)2-L-Lys-D-Ala-|-D-Ala. Also transpeptidation of peptidyl-alanyl moieties that are N-acyl substituents of D-alanine.. It participates in cell wall biogenesis; peptidoglycan biosynthesis. Functionally, catalyzes distinct carboxypeptidation and transpeptidation reactions during the last stages of wall peptidoglycan synthesis. Mistaking a beta-lactam antibiotic molecule for a normal substrate (i.e. a D-alanyl-D-alanine-terminated peptide), it becomes immobilized in the form of a long-lived, serine-ester-linked acyl enzyme and thus behave as penicillin-binding protein (PBP). The protein is D-alanyl-D-alanine carboxypeptidase of Streptomyces sp. (strain R61).